The sequence spans 355 residues: Aminopeptidase N (355 aa).

Residues E156 and 290–294 (GAMEN) each bind substrate. Residue H326 participates in Zn(2+) binding. The active-site Proton acceptor is E327. The Zn(2+) site is built by H330 and E349. E349 contributes to the substrate binding site.

It belongs to the peptidase M1 family. It depends on Zn(2+) as a cofactor.

The protein localises to the cytoplasm. It carries out the reaction Release of an N-terminal amino acid, Xaa-|-Yaa- from a peptide, amide or arylamide. Xaa is preferably Ala, but may be most amino acids including Pro (slow action). When a terminal hydrophobic residue is followed by a prolyl residue, the two may be released as an intact Xaa-Pro dipeptide.. Its function is as follows. Aminopeptidase N is involved in the degradation of intracellular peptides generated by protein breakdown during normal growth as well as in response to nutrient starvation. This Acetobacter pasteurianus (Acetobacter turbidans) protein is Aminopeptidase N (pepN).